The sequence spans 368 residues: 3-dehydroquinate synthase (368 aa).

NAD(+) contacts are provided by residues 71 to 76, 105 to 109, 129 to 130, lysine 142, and lysine 151; these read DGEAAK, GATTD, and TT. 3 residues coordinate Zn(2+): glutamate 184, histidine 247, and histidine 263.

The protein belongs to the sugar phosphate cyclases superfamily. Dehydroquinate synthase family. The cofactor is Co(2+). It depends on Zn(2+) as a cofactor. NAD(+) serves as cofactor.

The protein resides in the cytoplasm. It catalyses the reaction 7-phospho-2-dehydro-3-deoxy-D-arabino-heptonate = 3-dehydroquinate + phosphate. It functions in the pathway metabolic intermediate biosynthesis; chorismate biosynthesis; chorismate from D-erythrose 4-phosphate and phosphoenolpyruvate: step 2/7. Catalyzes the conversion of 3-deoxy-D-arabino-heptulosonate 7-phosphate (DAHP) to dehydroquinate (DHQ). The protein is 3-dehydroquinate synthase of Thermobifida fusca (strain YX).